A 623-amino-acid chain; its full sequence is Kelch-like protein diablo (623 aa).

Residues 1–54 (MGDLPGSGSTAQPRDAAVTGTGGNSTAGGGSSVGSTAVDRPPSPARLSHTSEKH) are disordered. Residue Thr-19 is modified to Phosphothreonine. The span at 20–32 (GTGGNSTAGGGSS) shows a compositional bias: gly residues. Positions 72–139 (CDVVLNVGGR…CYTAHIIVEE (68 aa)) constitute a BTB domain. The BACK domain maps to 174 to 276 (CLGIRAFADT…SPKFLVGTVG (103 aa)). Kelch repeat units follow at residues 323 to 369 (VLFA…VLND), 371 to 417 (LYAV…VLDG), 418 to 464 (FLYA…VLGG), 466 to 511 (LYAI…VFNN), 513 to 558 (IYAV…VVNG), and 559 to 605 (QLYA…VMRA).

It functions in the pathway protein modification; protein ubiquitination. In terms of biological role, probable substrate-specific adapter of an E3 ubiquitin-protein ligase complex which mediates the ubiquitination and subsequent proteasomal degradation of target proteins. May have a role in synapse differentiation and growth. The polypeptide is Kelch-like protein diablo (Drosophila melanogaster (Fruit fly)).